A 225-amino-acid polypeptide reads, in one-letter code: Rho GDP-dissociation inhibitor 3 (225 aa).

It belongs to the Rho GDI family. Primarily expressed in pancreas and brain.

The protein resides in the cytoplasm. In terms of biological role, inhibits GDP/GTP exchange reaction of RhoB. Interacts specifically with the GDP- and GTP-bound forms of post-translationally processed Rhob and Rhog proteins, both of which show a growth-regulated expression in mammalian cells. Stimulates the release of the GDP-bound but not the GTP-bound RhoB protein. Also inhibits the GDP/GTP exchange of RhoB but shows less ability to inhibit the dissociation of prebound GTP. The sequence is that of Rho GDP-dissociation inhibitor 3 (ARHGDIG) from Homo sapiens (Human).